The primary structure comprises 546 residues: Membrane protein insertase YidC (546 aa).

Residues 8–28 traverse the membrane as a helical segment; sequence ILLATVLSVGILILWQVIFPT. The segment at 31–70 is disordered; sequence VPPKPAPPPAAEVAKPAAPASPAPGAAAPAVPAPPPDAPE. Over residues 41-60 the composition is skewed to low complexity; the sequence is AEVAKPAAPASPAPGAAAPA. A run of 5 helical transmembrane segments spans residues 326–346, 356–376, 422–442, 459–479, and 498–518; these read IDYG…LYVM, WGVA…PLTY, LGGC…YAAL, LTAH…SFVM, and FFPG…TLYI.

The protein belongs to the OXA1/ALB3/YidC family. Type 1 subfamily. Interacts with the Sec translocase complex via SecD. Specifically interacts with transmembrane segments of nascent integral membrane proteins during membrane integration.

It is found in the cell inner membrane. In terms of biological role, required for the insertion and/or proper folding and/or complex formation of integral membrane proteins into the membrane. Involved in integration of membrane proteins that insert both dependently and independently of the Sec translocase complex, as well as at least some lipoproteins. Aids folding of multispanning membrane proteins. The polypeptide is Membrane protein insertase YidC (Anaeromyxobacter sp. (strain K)).